The primary structure comprises 165 residues: uncharacterized protein (165 aa).

The first 25 residues, 1–25 (MKRVLFSVIVFTAVGFTFCQSKAHA), serve as a signal peptide directing secretion.

This is an uncharacterized protein from Bacillus subtilis (strain 168).